The sequence spans 469 residues: Alpha-2C adrenergic receptor (469 aa).

A disordered region spans residues 1–29; it reads MDLQLTTNSTDSGDRGGSSNESLQRQPPS. Residues 1–36 are Extracellular-facing; that stretch reads MDLQLTTNSTDSGDRGGSSNESLQRQPPSQYSPAEV. 2 N-linked (GlcNAc...) asparagine glycosylation sites follow: asparagine 8 and asparagine 20. Residues 37–62 traverse the membrane as a helical segment; that stretch reads AGLAAVVSFLIVFTIVGNVLVVIAVL. The Cytoplasmic portion of the chain corresponds to 63–73; that stretch reads TSRALKAPQNL. Residues 74-99 form a helical membrane-spanning segment; the sequence is FQVSLASADILVATLVMPFSLANELM. The Extracellular segment spans residues 100 to 109; that stretch reads NYWYFGKVWC. Cysteines 109 and 187 form a disulfide. Residues 110 to 132 traverse the membrane as a helical segment; sequence VIYLALDVLFCTSSIVHLCAISL. Over 133–154 the chain is Cytoplasmic; sequence DRYWSVTQAVEYNLKRTPRRIK. The chain crosses the membrane as a helical span at residues 155 to 175; sequence GIIVTVWLISAVISFPPLISL. Residues 176-194 lie on the Extracellular side of the membrane; the sequence is YRDPEDDLYPQCELNDETW. The helical transmembrane segment at 195 to 216 threads the bilayer; sequence YILSSCIGSFFAPCIIMVLVYV. Residues 217 to 386 lie on the Cytoplasmic side of the membrane; sequence RIYRVAKLRT…RKVTQAREKR (170 aa). Disordered regions lie at residues 232 to 261 and 279 to 353; these read KRTVPEGSSQTENGLSRPPVGAGPSTAAAA and HHHH…SRLS. Residues 279 to 296 are compositionally biased toward basic residues; it reads HHHHHLHHHHHHHHHQLR. A compositionally biased stretch (acidic residues) spans 301–310; it reads LEDIELEESS. The segment covering 331-353 has biased composition (low complexity); that stretch reads RGFSFSFSSTKGGQSAGAGSRLS. Residues 387–407 traverse the membrane as a helical segment; that stretch reads FTFVLAVVMGVFVVCWFPFFF. Residues 408–427 are Extracellular-facing; it reads TYSLYGICREACQVPETLFK. A helical membrane pass occupies residues 428-448; the sequence is FFFWIGYCNSSLNPVIYTIFN. At 449–469 the chain is on the cytoplasmic side; sequence QDFRRSFKHILFKKKKKTSLQ.

This sequence belongs to the G-protein coupled receptor 1 family. Adrenergic receptor subfamily. ADRA2C sub-subfamily.

The protein resides in the cell membrane. Alpha-2 adrenergic receptors mediate the catecholamine-induced inhibition of adenylate cyclase through the action of G proteins. The protein is Alpha-2C adrenergic receptor (ADRA2C) of Didelphis virginiana (North American opossum).